A 332-amino-acid chain; its full sequence is Probable class II chitinase ARB_00204 (332 aa).

Residues 1–18 (MKTPFTILAALTVATTLA) form the signal peptide. The GH18 domain maps to 19 to 331 (DVPDEWDIIE…NPHRKYLDSF (313 aa)). The active-site Proton donor is the E118. Residue N245 is glycosylated (N-linked (GlcNAc...) asparagine).

Belongs to the glycosyl hydrolase 18 family. Chitinase class II subfamily.

The protein resides in the secreted. It carries out the reaction Random endo-hydrolysis of N-acetyl-beta-D-glucosaminide (1-&gt;4)-beta-linkages in chitin and chitodextrins.. In terms of biological role, degrades chitin and chitotriose. This Arthroderma benhamiae (strain ATCC MYA-4681 / CBS 112371) (Trichophyton mentagrophytes) protein is Probable class II chitinase ARB_00204.